We begin with the raw amino-acid sequence, 736 residues long: DNA topoisomerase 4 subunit A (736 aa).

One can recognise a Topo IIA-type catalytic domain in the interval 32-496 (LPDVRDGLKP…SFEQVTLTNQ (465 aa)). The active-site O-(5'-phospho-DNA)-tyrosine intermediate is Tyr120.

This sequence belongs to the type II topoisomerase GyrA/ParC subunit family. ParC type 1 subfamily. In terms of assembly, heterotetramer composed of ParC and ParE.

The protein resides in the cell membrane. The enzyme catalyses ATP-dependent breakage, passage and rejoining of double-stranded DNA.. Functionally, topoisomerase IV is essential for chromosome segregation. It relaxes supercoiled DNA. Performs the decatenation events required during the replication of a circular DNA molecule. This is DNA topoisomerase 4 subunit A from Rickettsia bellii (strain RML369-C).